A 291-amino-acid chain; its full sequence is Glycine--tRNA ligase alpha subunit (291 aa).

Belongs to the class-II aminoacyl-tRNA synthetase family. As to quaternary structure, tetramer of two alpha and two beta subunits.

It is found in the cytoplasm. The catalysed reaction is tRNA(Gly) + glycine + ATP = glycyl-tRNA(Gly) + AMP + diphosphate. The polypeptide is Glycine--tRNA ligase alpha subunit (Geotalea uraniireducens (strain Rf4) (Geobacter uraniireducens)).